We begin with the raw amino-acid sequence, 877 residues long: MTTESMPESTNDYQPQSIEAAIQHVWDEQQVFVAKEDDSKEKFYCLSMFPYPSGKLHMGHVRNYTIGDVVSRFQRMQGKNVLQPMGWDAFGLPAENAAMDNQVAPAKWTYQNIDYMRNQLKRLGLGYDWTREVATCHPEYYRWEQWLFTRLMEKGLVYRKLSVVNWDPVDQTVLANEQVIDGKGWRSGVPVERKEIAQWFLRITDYAEELLTDLDQLEGWPEQVKTMQKNWIGKSTGLEIEFPIASGLDESNGSLKVYTTRPDTLMGVTYVAVAADHPWARKASVNNEPLERFIEECSHISTAEADMETMEKKGVDTGIRVKHPITGDEVPVWAANFVLMGYGTGAVMSVPAHDQRDYEFAKAYDLPIKAVIAPKAGEEADVSEAAFTEKGVLVNSGQFDGLKSKQALHEMAKVLGELGLGEKQTNYRLRDWGISRQRYWGCPIPVIYCPACGALPVPEKDLPVRLPEDVVPDGSGSPLAKLDSFKKCECPQCGGPANRETDTFDTFFESSWYHARYTSRHEDNAMLDKAAADHWLPVDQYIGGIEHAILHLLYARFFHKLMRDEGLVSSDEPFKNLLTQGMVLAGSWFTQDEKGKQTWYSPLDVDPVTDDKGAIVKGTLKSDGTEVQYGGIIKMSKSKNNGIDPQTLIDQYGADTLRLYIMFASPPEQTLEWSDSAVEGAHRFLNRVWRQVQTHVSTGVVAACTSNDDLTKEQKALRLKLHTTLQKVTDDMGRRMHFNTAIAATMELLNDISRFKDESDAGRSVMQEALEMLVLMLSPMTPHASQALWEALGHDGLVLNVTWPTVDDAALVKDEIEIMVQVNGKLRGKIEVAAEADKDTILAAAKANEQAAKFIDGKDIVKEIVVPGRLVNIVVKG.

The short motif at 50-60 (PYPSGKLHMGH) is the 'HIGH' region element. The 'KMSKS' region signature appears at 634-638 (KMSKS). Position 637 (Lys-637) interacts with ATP.

Belongs to the class-I aminoacyl-tRNA synthetase family.

It is found in the cytoplasm. The catalysed reaction is tRNA(Leu) + L-leucine + ATP = L-leucyl-tRNA(Leu) + AMP + diphosphate. The protein is Leucine--tRNA ligase of Hydrogenovibrio crunogenus (strain DSM 25203 / XCL-2) (Thiomicrospira crunogena).